A 407-amino-acid chain; its full sequence is Membrane protein MosC (407 aa).

Residues 1 to 24 (MTRTSPRHHAPSETKRRVPMGGVH) form a disordered region. The next 11 membrane-spanning stretches (helical) occupy residues 31–51 (LTITAVAFQFFINGLVLAAWA), 69–89 (GVLLLIMAAGALLFMSLAGYF), 109–129 (ALVLIFAAPNCMTFLCSIVLF), 157–177 (AFLHGCSSTGILAGIMTFGVI), 186–206 (SVTLLTGILIVARWLFPHLLD), 225–245 (LLMFGILSFLTMVTDGAIAEW), 255–275 (QVTDQVGSLGYVAFTLLMIAG), 290–310 (ALIAISGSLASAGMTTALFMP), 316–336 (LAGFALLGLGMANLVPIIFSE), 347–367 (VGLTFVSVCGYSGFLVGPPII), and 377–397 (GRALLFIIAVGVIVACASVFF).

It is found in the cell membrane. Functionally, may be a membrane transport protein that could either transport a precursor for rhizopine biosynthesis into bacteroids or the finished product from the bacteroids. This is Membrane protein MosC (mosC) from Rhizobium meliloti (Ensifer meliloti).